Here is an 85-residue protein sequence, read N- to C-terminus: Neutrophil elastase 2A (85 aa).

A Peptidase S1 domain is found at 1–85; that stretch reads IVGGRAAEPH…VAQGVFSFVR (85 aa). Residue Ser-67 is the Charge relay system of the active site.

Belongs to the peptidase S1 family. Elastase subfamily.

Its function is as follows. May be involved in the degradation of connective tissue in chronic lung disease. This Equus caballus (Horse) protein is Neutrophil elastase 2A.